The chain runs to 146 residues: 3-dehydroquinate dehydratase (146 aa).

Tyr-24 acts as the Proton acceptor in catalysis. 3 residues coordinate substrate: Asn-73, His-79, and Asp-86. Residue His-99 is the Proton donor of the active site. Residues 100 to 101 (LS) and Arg-110 each bind substrate.

This sequence belongs to the type-II 3-dehydroquinase family. As to quaternary structure, homododecamer.

It catalyses the reaction 3-dehydroquinate = 3-dehydroshikimate + H2O. Its pathway is metabolic intermediate biosynthesis; chorismate biosynthesis; chorismate from D-erythrose 4-phosphate and phosphoenolpyruvate: step 3/7. Its function is as follows. Catalyzes a trans-dehydration via an enolate intermediate. This chain is 3-dehydroquinate dehydratase, found in Shewanella baltica (strain OS185).